A 118-amino-acid polypeptide reads, in one-letter code: Large ribosomal subunit protein bL17 (118 aa).

It belongs to the bacterial ribosomal protein bL17 family. As to quaternary structure, part of the 50S ribosomal subunit. Contacts protein L32.

In Campylobacter concisus (strain 13826), this protein is Large ribosomal subunit protein bL17.